We begin with the raw amino-acid sequence, 66 residues long: Large ribosomal subunit protein bL32 (66 aa).

Residues 1–19 (MAVPKRKMSRSNTRARRSQ) are compositionally biased toward basic residues. The disordered stretch occupies residues 1–20 (MAVPKRKMSRSNTRARRSQW).

It belongs to the bacterial ribosomal protein bL32 family.

The chain is Large ribosomal subunit protein bL32 from Beutenbergia cavernae (strain ATCC BAA-8 / DSM 12333 / CCUG 43141 / JCM 11478 / NBRC 16432 / NCIMB 13614 / HKI 0122).